The chain runs to 367 residues: 2-aminoethylphosphonate--pyruvate transaminase (367 aa).

Lys193 carries the post-translational modification N6-(pyridoxal phosphate)lysine.

It belongs to the class-V pyridoxal-phosphate-dependent aminotransferase family. PhnW subfamily. As to quaternary structure, homodimer. It depends on pyridoxal 5'-phosphate as a cofactor.

It catalyses the reaction (2-aminoethyl)phosphonate + pyruvate = phosphonoacetaldehyde + L-alanine. Involved in phosphonate degradation. The protein is 2-aminoethylphosphonate--pyruvate transaminase of Vibrio cholerae serotype O1 (strain ATCC 39541 / Classical Ogawa 395 / O395).